A 241-amino-acid polypeptide reads, in one-letter code: DNA repair protein RecO (241 aa).

This sequence belongs to the RecO family.

In terms of biological role, involved in DNA repair and RecF pathway recombination. The chain is DNA repair protein RecO from Yersinia enterocolitica serotype O:8 / biotype 1B (strain NCTC 13174 / 8081).